Here is a 1402-residue protein sequence, read N- to C-terminus: DNA-directed RNA polymerase subunit beta' (1402 aa).

Residues C71, C73, C86, and C89 each contribute to the Zn(2+) site. Mg(2+) is bound by residues D462, D464, and D466. Positions 811, 885, 892, and 895 each coordinate Zn(2+).

The protein belongs to the RNA polymerase beta' chain family. As to quaternary structure, the RNAP catalytic core consists of 2 alpha, 1 beta, 1 beta' and 1 omega subunit. When a sigma factor is associated with the core the holoenzyme is formed, which can initiate transcription. It depends on Mg(2+) as a cofactor. The cofactor is Zn(2+).

The catalysed reaction is RNA(n) + a ribonucleoside 5'-triphosphate = RNA(n+1) + diphosphate. In terms of biological role, DNA-dependent RNA polymerase catalyzes the transcription of DNA into RNA using the four ribonucleoside triphosphates as substrates. The protein is DNA-directed RNA polymerase subunit beta' of Bartonella henselae (strain ATCC 49882 / DSM 28221 / CCUG 30454 / Houston 1) (Rochalimaea henselae).